The primary structure comprises 348 residues: Ileal sodium/bile acid cotransporter (348 aa).

Residues 1–28 (MDNSSVCPPNATVCEGDSCVVPESNFNA) are Extracellular-facing. N-linked (GlcNAc...) asparagine glycans are attached at residues N3 and N10. The helical transmembrane segment at 29 to 49 (ILNTVMSTVLTILLAMVMFSM) threads the bilayer. Residues 50–87 (GCNVEVHKFLGHIKRPWGIFVGFLCQFGIMPLTGFILS) are Cytoplasmic-facing. A helical membrane pass occupies residues 88 to 108 (VASGILPVQAVVVLIMGCCPG). Residues 109–126 (GTGSNILAYWIDGDMDLS) are Extracellular-facing. A helical membrane pass occupies residues 127-147 (VSMTTCSTLLALGMMPLCLFV). Residues 148-157 (YTKMWVDSGT) are Cytoplasmic-facing. Residues 158 to 178 (IVIPYDSIGISLVALVIPVSF) traverse the membrane as a helical segment. The Extracellular segment spans residues 179–195 (GMFVNHKWPQKAKIILK). A helical membrane pass occupies residues 196–216 (IGSITGVILIVLIAVIGGILY). Topologically, residues 217-224 (QSAWIIEP) are cytoplasmic. The chain crosses the membrane as a helical span at residues 225–245 (KLWIIGTIFPIAGYSLGFFLA). The Extracellular segment spans residues 246–284 (RLAGQPWYRCRTVALETGMQNTQLCSTIVQLSFSPEDLN). A helical transmembrane segment spans residues 285–305 (LVFTFPLIYTVFQLVFAAVIL). Topologically, residues 306-348 (GIYVTYRKCYGKNDAEFLEKTDNEMDSRPSFDETNKGFQPDEK) are cytoplasmic. The disordered stretch occupies residues 328-348 (NEMDSRPSFDETNKGFQPDEK). S335 carries the post-translational modification Phosphoserine.

It belongs to the bile acid:sodium symporter (BASS) (TC 2.A.28) family. As to quaternary structure, monomer and homodimer. Expressed in ileum.

It localises to the membrane. The enzyme catalyses taurocholate(out) + 2 Na(+)(out) = taurocholate(in) + 2 Na(+)(in). The catalysed reaction is cholate(out) + 2 Na(+)(out) = cholate(in) + 2 Na(+)(in). It carries out the reaction taurochenodeoxycholate(out) + 2 Na(+)(out) = taurochenodeoxycholate(in) + 2 Na(+)(in). It catalyses the reaction tauroursodeoxycholate(out) + 2 Na(+)(out) = tauroursodeoxycholate(in) + 2 Na(+)(in). The enzyme catalyses glycocholate(out) + 2 Na(+)(out) = glycocholate(in) + 2 Na(+)(in). The catalysed reaction is tauronorcholate(out) + 2 Na(+)(out) = tauronorcholate(in) + 2 Na(+)(in). It carries out the reaction tauroallocholate(out) + 2 Na(+)(out) = tauroallocholate(in) + 2 Na(+)(in). It catalyses the reaction taurodeoxycholate(out) + 2 Na(+)(out) = taurodeoxycholate(in) + 2 Na(+)(in). The enzyme catalyses tauro-beta-muricholate(out) + 2 Na(+)(out) = tauro-beta-muricholate(in) + 2 Na(+)(in). Functionally, plays a critical role in the sodium-dependent reabsorption of bile acids from the lumen of the small intestine. Transports various bile acids, unconjugated or conjugated, such as cholate and taurocholate. Also responsible for bile acid transport in the renal proximal tubules, a salvage mechanism that helps conserve bile acids. Works collaboratively with the Na(+)-taurocholate cotransporting polypeptide (NTCP), the organic solute transporter (OST), and the bile salt export pump (BSEP), to ensure efficacious biological recycling of bile acids during enterohepatic circulation. This is Ileal sodium/bile acid cotransporter (Slc10a2) from Mus musculus (Mouse).